The primary structure comprises 344 residues: MEPHKVVPLSKPHPPVVGKVTHHSIELYWDLEQKEKRQGPQEQWLRFSIEEEDPKMHSYGVIYTGYATRHVVEGLEPRTLYKFRLKVTSPSGEYEYSPVVSVATTREPISSEHFHRAVSVNDEDLLLRILEGGHVMIDVPNKFGFTALMVAAQKGYTRLVKILVSNGTDVNLKNGSGKDSLMLACYAGHLDVVKYLRRHGASWEARDLGGCTALHWAADGGHCSVIDWMIKDGCEVDVVDTGSGWTPLMRVSAVTGSQKVASLLIEAGADVNIKDKDGKTPLMVAVLNNHEQLVQLLLDKGADATVKNEFGKGVLEMARVFDRQNVLSLLEEKKKKMPRKSSVH.

In terms of domain architecture, Fibronectin type-III spans 11-108 (KPHPPVVGKV…VVSVATTREP (98 aa)). ANK repeat units lie at residues 109–139 (ISSE…MIDV), 143–172 (FGFT…DVNL), 176–205 (SGKD…SWEA), 209–238 (GGCT…EVDV), 243–273 (SGWT…DVNI), and 277–306 (DGKT…DATV).

Interacts with COPS5; regulates the phosphorylation of JUN and the transcriptional activity of AP-1. Interacts with RYBP; may prevent the ubiquitin-mediated proteasomal degradation of FANK1. Post-translationally, polyubiquitinated. Polyubiquitination leads to proteasomal degradation. Mostly restricted to testis (at protein level), including mid to late pachytene spermatocytes (stages VI-X), diplotene spermatocytes (stage XI), meiotically dividing spermatocytes (stage XII) and spermatids in steps 1-14. Highest levels in late pachytene spermatocytes and spermatids in steps 1-9.

It is found in the nucleus. The protein localises to the cytoplasm. It localises to the cytosol. Its subcellular location is the cytoskeleton. The protein resides in the cilium basal body. It is found in the cell projection. The protein localises to the cilium. Its function is as follows. Through the activation of JUN and AP-1-mediated transcription, may regulate apoptosis. This Mus musculus (Mouse) protein is Fibronectin type 3 and ankyrin repeat domains 1 protein.